Here is a 365-residue protein sequence, read N- to C-terminus: Probable 7-methylxanthine methyltransferase 4 (365 aa).

S-adenosyl-L-homocysteine is bound at residue Tyr18. Theobromine is bound at residue Thr25. S-adenosyl-L-homocysteine contacts are provided by Cys62, Gln67, Asp99, Leu100, Ser132, and Phe133. Theobromine is bound by residues Tyr150, His153, and Trp154. Residues Asn170, Asp256, Phe258, and Asn259 each coordinate Mg(2+). Phe311 is a binding site for theobromine.

This sequence belongs to the methyltransferase superfamily. Type-7 methyltransferase family. Mg(2+) is required as a cofactor.

It carries out the reaction 7-methylxanthine + S-adenosyl-L-methionine = theobromine + S-adenosyl-L-homocysteine + H(+). Its pathway is alkaloid biosynthesis. In terms of biological role, involved in the biosynthesis of theobromine. In Theobroma cacao (Cacao), this protein is Probable 7-methylxanthine methyltransferase 4.